Here is a 690-residue protein sequence, read N- to C-terminus: Long-chain fatty acid transport protein 5 (690 aa).

Residues 1–30 (MGVRQQLALLLLLLLLLWGLGQPVWPVAVA) are Cytoplasmic-facing. 2 helical membrane passes run 31 to 51 (LTLRWLLGDPTCCVLLGLAML) and 56 to 76 (LGPWVPHGLSLAAAALALTLL). The Cytoplasmic segment spans residues 77–690 (PARLPPGLRW…QAVCEGTWRL (614 aa)). AMP is bound at residue 292–303 (FIYTSGTTGLPK). The residue at position 501 (Ser-501) is a Phosphoserine.

Belongs to the ATP-dependent AMP-binding enzyme family. As to expression, predominantly expressed in liver.

It localises to the endoplasmic reticulum membrane. The protein resides in the microsome. It is found in the cell membrane. The catalysed reaction is a fatty acid(in) = a fatty acid(out). It catalyses the reaction cholate + ATP + CoA = choloyl-CoA + AMP + diphosphate. It carries out the reaction chenodeoxycholate + ATP + CoA = chenodeoxycholoyl-CoA + AMP + diphosphate. The enzyme catalyses deoxycholate + ATP + CoA = deoxycholoyl-CoA + AMP + diphosphate. The catalysed reaction is lithocholate + ATP + CoA = lithocholoyl-CoA + AMP + diphosphate. It catalyses the reaction (25R)-3alpha,7alpha,12alpha-trihydroxy-5beta-cholestan-26-oate + ATP + CoA = (25R)-3alpha,7alpha,12alpha-trihydroxy-5beta-cholestan-26-oyl-CoA + AMP + diphosphate. It carries out the reaction a very long-chain fatty acid + ATP + CoA = a very long-chain fatty acyl-CoA + AMP + diphosphate. The enzyme catalyses tetracosanoate + ATP + CoA = tetracosanoyl-CoA + AMP + diphosphate. The catalysed reaction is hexacosanoate + ATP + CoA = hexacosanoyl-CoA + AMP + diphosphate. It catalyses the reaction a long-chain fatty acid + ATP + CoA = a long-chain fatty acyl-CoA + AMP + diphosphate. It carries out the reaction octadecanoate + ATP + CoA = octadecanoyl-CoA + AMP + diphosphate. The enzyme catalyses eicosanoate + ATP + CoA = eicosanoyl-CoA + AMP + diphosphate. With respect to regulation, 3-alpha,7-alpha,12-alpha-trihydroxy-5-beta-cholestanate (THCA) inhibits the activation of cholate. Functionally, may mediate the import of long-chain fatty acids (LCFA) by facilitating their transport across cell membranes. Also catalyzes the ATP-dependent formation of fatty acyl-CoA using LCFA and very-long-chain fatty acids (VLCFA) as substrates. Mainly functions as a bile acyl-CoA synthetase catalyzing the activation of bile acids via ATP-dependent formation of bile acid CoA thioesters which is necessary for their subsequent conjugation with glycine or taurine. Both primary bile acids (cholic acid and chenodeoxycholic acid) and secondary bile acids (deoxycholic acid and lithocholic acid) are the principal substrates. In vitro, activates 3-alpha,7-alpha,12-alpha-trihydroxy-5-beta-cholestanate ((25R)-3alpha,7alpha,12alpha-trihydroxy-5beta-cholestan-26-oate or THCA), the C27 precursor of cholic acid deriving from the de novo synthesis from cholesterol. Plays an important role in hepatic fatty acid uptake and bile acid reconjugation and recycling but not in de novo synthesis of bile acids. The chain is Long-chain fatty acid transport protein 5 (SLC27A5) from Homo sapiens (Human).